A 75-amino-acid polypeptide reads, in one-letter code: Small ribosomal subunit protein bS18 (75 aa).

This sequence belongs to the bacterial ribosomal protein bS18 family. In terms of assembly, part of the 30S ribosomal subunit. Forms a tight heterodimer with protein bS6.

In terms of biological role, binds as a heterodimer with protein bS6 to the central domain of the 16S rRNA, where it helps stabilize the platform of the 30S subunit. The protein is Small ribosomal subunit protein bS18 of Thermotoga sp. (strain RQ2).